A 123-amino-acid polypeptide reads, in one-letter code: Cholecystokinin A (123 aa).

Positions 1 to 20 are cleaved as a signal peptide; it reads MYSGICICLLLAMLSASSKA. Positions 21 to 103 are excised as a propeptide; it reads HQSEDAVVTE…FDQPHRINDR (83 aa). Tyr105 carries the sulfotyrosine modification. A Phenylalanine amide modification is found at Phe111. A propeptide spanning residues 115 to 123 is cleaved from the precursor; the sequence is SAEEYEYSS.

It belongs to the gastrin/cholecystokinin family. Post-translationally, the precursor is cleaved by proteases to produce a number of active cholecystokinins. In terms of tissue distribution, brain, gastrointestinal tract and lung.

It localises to the secreted. This is Cholecystokinin A (cck-a) from Xenopus laevis (African clawed frog).